We begin with the raw amino-acid sequence, 176 residues long: Japanin-like-RS (176 aa).

A signal peptide spans 1-24; sequence MKVLLCLVCSFYIIVSSITTMTTG. Disulfide bonds link cysteine 52–cysteine 174 and cysteine 138–cysteine 162. Asparagine 155 is a glycosylation site (N-linked (GlcNAc...) asparagine).

Belongs to the calycin superfamily. Lipocalin family. As to quaternary structure, homodimer; non-disulfide-linked. Each monomer accommodates one molecule of cholesterol in a pocket. In terms of tissue distribution, expressed in salivary glands.

It is found in the secreted. Salivary tick protein that modulates host immune response. This protein blocks dendritic cell (DC) differentiation from monocytes. In addition, it inhibits up-regulation of costimulatory molecules and pro-inflammatory cytokines in response to stimuli and promotes up-regulation of co-inhibitory molecules and the anti-inflammatory cytokine interleukin-10. It has a pocket to accomodate cholesterol, which may have immune-modulatory roles, either directly or through interactions with the host gut microbiota. This Rhipicephalus sanguineus (Brown dog tick) protein is Japanin-like-RS.